The following is a 369-amino-acid chain: Peptide chain release factor 2 (369 aa).

Gln251 carries the N5-methylglutamine modification.

The protein belongs to the prokaryotic/mitochondrial release factor family. Methylated by PrmC. Methylation increases the termination efficiency of RF2.

It is found in the cytoplasm. In terms of biological role, peptide chain release factor 2 directs the termination of translation in response to the peptide chain termination codons UGA and UAA. The chain is Peptide chain release factor 2 from Acidothermus cellulolyticus (strain ATCC 43068 / DSM 8971 / 11B).